The chain runs to 185 residues: Ribosome-recycling factor (185 aa).

This sequence belongs to the RRF family.

It localises to the cytoplasm. In terms of biological role, responsible for the release of ribosomes from messenger RNA at the termination of protein biosynthesis. May increase the efficiency of translation by recycling ribosomes from one round of translation to another. The protein is Ribosome-recycling factor of Campylobacter jejuni subsp. jejuni serotype O:23/36 (strain 81-176).